A 320-amino-acid chain; its full sequence is MRSAQVYRWQIPMDAGVVLRDRRLKTRDGLYVCLREGEREGWGEISPLPGFSQETWEDAQSVLLAWVNNWLAGDCELPQMPSVAFGVSCALAELAETLPQAANYRAAPLCNGDPDDLILKLADMPGEKVAKVKVGLYEAVRDGMVVNLLLEAIPDLHLRLDANRAWTPLKGQQFAKYVNPDYRHRIAFLEEPCKTRDDSRAFARETDIAIAWDESLREPDFAFVAEEGVRAVVIKPTLTGSLEKVREQVKAAHALGLTAVISSSIESSLGLTQLARIAAWLTPDTIPGLDTLDLMQAQQVRRWPGSPLPLVDVDALERLL.

K133 acts as the Proton donor in catalysis. Mg(2+) contacts are provided by D161, E190, and D213. K235 (proton acceptor) is an active-site residue.

This sequence belongs to the mandelate racemase/muconate lactonizing enzyme family. MenC type 1 subfamily. The cofactor is a divalent metal cation.

The enzyme catalyses (1R,6R)-6-hydroxy-2-succinyl-cyclohexa-2,4-diene-1-carboxylate = 2-succinylbenzoate + H2O. It functions in the pathway quinol/quinone metabolism; 1,4-dihydroxy-2-naphthoate biosynthesis; 1,4-dihydroxy-2-naphthoate from chorismate: step 4/7. Its pathway is quinol/quinone metabolism; menaquinone biosynthesis. Functionally, converts 2-succinyl-6-hydroxy-2,4-cyclohexadiene-1-carboxylate (SHCHC) to 2-succinylbenzoate (OSB). The polypeptide is o-succinylbenzoate synthase (Escherichia coli O6:K15:H31 (strain 536 / UPEC)).